Reading from the N-terminus, the 206-residue chain is Small ribosomal subunit protein uS4A (206 aa).

The region spanning 98–164 (LRLDNVAYKL…EKFKTFAENP (67 aa)) is the S4 RNA-binding domain.

Belongs to the universal ribosomal protein uS4 family. Part of the 30S ribosomal subunit. Contacts protein S5. The interaction surface between S4 and S5 is involved in control of translational fidelity.

In terms of biological role, one of the primary rRNA binding proteins, it binds directly to 16S rRNA where it nucleates assembly of the body of the 30S subunit. Functionally, with S5 and S12 plays an important role in translational accuracy. The polypeptide is Small ribosomal subunit protein uS4A (rspD1) (Clostridium acetobutylicum (strain ATCC 824 / DSM 792 / JCM 1419 / IAM 19013 / LMG 5710 / NBRC 13948 / NRRL B-527 / VKM B-1787 / 2291 / W)).